Consider the following 127-residue polypeptide: LIM domain-containing protein 2 (127 aa).

Met1 carries the N-acetylmethionine modification. Positions 1 to 24 (MFQAAGAAQATPSHDAKGGGSSTV) are disordered. The LIM zinc-binding domain occupies 38–98 (ETCAACQKTV…KPHFQQLFKS (61 aa)). Zn(2+)-binding residues include Cys40, Cys43, His61, Cys64, Cys67, Cys70, Cys88, and His91.

In terms of assembly, interacts with ILK.

It is found in the cytoplasm. Its subcellular location is the nucleus. Acts as an activator of the protein-kinase ILK, thereby regulating cell motility. The sequence is that of LIM domain-containing protein 2 from Homo sapiens (Human).